The primary structure comprises 110 residues: Thiosulfate sulfurtransferase GlpE (110 aa).

The Rhodanese domain occupies 19–107; the sequence is EDSLAVLVDI…WRRQALPIIQ (89 aa). Residue Cys67 is the Cysteine persulfide intermediate of the active site.

The protein belongs to the GlpE family.

It is found in the cytoplasm. The enzyme catalyses thiosulfate + hydrogen cyanide = thiocyanate + sulfite + 2 H(+). It catalyses the reaction thiosulfate + [thioredoxin]-dithiol = [thioredoxin]-disulfide + hydrogen sulfide + sulfite + 2 H(+). Its function is as follows. Transferase that catalyzes the transfer of sulfur from thiosulfate to thiophilic acceptors such as cyanide or dithiols. May function in a CysM-independent thiosulfate assimilation pathway by catalyzing the conversion of thiosulfate to sulfite, which can then be used for L-cysteine biosynthesis. The polypeptide is Thiosulfate sulfurtransferase GlpE (Photobacterium profundum (strain SS9)).